The chain runs to 118 residues: Large ribosomal subunit protein bL19 (118 aa).

It belongs to the bacterial ribosomal protein bL19 family.

This protein is located at the 30S-50S ribosomal subunit interface and may play a role in the structure and function of the aminoacyl-tRNA binding site. This is Large ribosomal subunit protein bL19 from Nautilia profundicola (strain ATCC BAA-1463 / DSM 18972 / AmH).